We begin with the raw amino-acid sequence, 441 residues long: Enolase (441 aa).

Residue glutamine 164 participates in (2R)-2-phosphoglycerate binding. The active-site Proton donor is glutamate 206. Mg(2+) is bound by residues aspartate 243, glutamate 289, and aspartate 316. Residues lysine 341, arginine 370, serine 371, and lysine 392 each coordinate (2R)-2-phosphoglycerate. Catalysis depends on lysine 341, which acts as the Proton acceptor.

The protein belongs to the enolase family. Mg(2+) serves as cofactor.

It is found in the cytoplasm. The protein localises to the secreted. The protein resides in the cell surface. It catalyses the reaction (2R)-2-phosphoglycerate = phosphoenolpyruvate + H2O. The protein operates within carbohydrate degradation; glycolysis; pyruvate from D-glyceraldehyde 3-phosphate: step 4/5. In terms of biological role, catalyzes the reversible conversion of 2-phosphoglycerate (2-PG) into phosphoenolpyruvate (PEP). It is essential for the degradation of carbohydrates via glycolysis. This chain is Enolase, found in Leuconostoc mesenteroides subsp. mesenteroides (strain ATCC 8293 / DSM 20343 / BCRC 11652 / CCM 1803 / JCM 6124 / NCDO 523 / NBRC 100496 / NCIMB 8023 / NCTC 12954 / NRRL B-1118 / 37Y).